We begin with the raw amino-acid sequence, 406 residues long: Probable tRNA sulfurtransferase (406 aa).

Positions 62–167 (AEVSNRLTKV…QDATYLSFED (106 aa)) constitute a THUMP domain. ATP-binding positions include 185 to 186 (ML), 210 to 211 (HF), R267, G289, and Q298.

This sequence belongs to the ThiI family.

The protein localises to the cytoplasm. It carries out the reaction [ThiI sulfur-carrier protein]-S-sulfanyl-L-cysteine + a uridine in tRNA + 2 reduced [2Fe-2S]-[ferredoxin] + ATP + H(+) = [ThiI sulfur-carrier protein]-L-cysteine + a 4-thiouridine in tRNA + 2 oxidized [2Fe-2S]-[ferredoxin] + AMP + diphosphate. The catalysed reaction is [ThiS sulfur-carrier protein]-C-terminal Gly-Gly-AMP + S-sulfanyl-L-cysteinyl-[cysteine desulfurase] + AH2 = [ThiS sulfur-carrier protein]-C-terminal-Gly-aminoethanethioate + L-cysteinyl-[cysteine desulfurase] + A + AMP + 2 H(+). The protein operates within cofactor biosynthesis; thiamine diphosphate biosynthesis. Its function is as follows. Catalyzes the ATP-dependent transfer of a sulfur to tRNA to produce 4-thiouridine in position 8 of tRNAs, which functions as a near-UV photosensor. Also catalyzes the transfer of sulfur to the sulfur carrier protein ThiS, forming ThiS-thiocarboxylate. This is a step in the synthesis of thiazole, in the thiamine biosynthesis pathway. The sulfur is donated as persulfide by IscS. The chain is Probable tRNA sulfurtransferase from Lactococcus lactis subsp. cremoris (strain MG1363).